The sequence spans 232 residues: Enolase-phosphatase E1 (232 aa).

The protein belongs to the HAD-like hydrolase superfamily. MasA/MtnC family. In terms of assembly, monomer. Mg(2+) serves as cofactor.

It catalyses the reaction 5-methylsulfanyl-2,3-dioxopentyl phosphate + H2O = 1,2-dihydroxy-5-(methylsulfanyl)pent-1-en-3-one + phosphate. It participates in amino-acid biosynthesis; L-methionine biosynthesis via salvage pathway; L-methionine from S-methyl-5-thio-alpha-D-ribose 1-phosphate: step 3/6. Its pathway is amino-acid biosynthesis; L-methionine biosynthesis via salvage pathway; L-methionine from S-methyl-5-thio-alpha-D-ribose 1-phosphate: step 4/6. Functionally, bifunctional enzyme that catalyzes the enolization of 2,3-diketo-5-methylthiopentyl-1-phosphate (DK-MTP-1-P) into the intermediate 2-hydroxy-3-keto-5-methylthiopentenyl-1-phosphate (HK-MTPenyl-1-P), which is then dephosphorylated to form the acireductone 1,2-dihydroxy-3-keto-5-methylthiopentene (DHK-MTPene). The protein is Enolase-phosphatase E1 of Xanthomonas campestris pv. campestris (strain 8004).